The following is a 193-amino-acid chain: Putative manganese efflux pump MntP (193 aa).

Helical transmembrane passes span 3-23 (IFAVFLLAIALSMDAFAVAVV), 41-61 (AAFGFFQFAMPVIGWWLGVSV), 69-89 (DHWIAFVLLGWIGGKMALSGL), 107-127 (AGRNLVVLGVATSIDALAVGL), 130-150 (AILGTPIWADAAIIGIVCAVI), and 164-184 (LCALNGWAELAGGLTLLAIAC).

It belongs to the MntP (TC 9.B.29) family.

It is found in the cell inner membrane. In terms of biological role, probably functions as a manganese efflux pump. The sequence is that of Putative manganese efflux pump MntP from Desulfovibrio desulfuricans (strain ATCC 27774 / DSM 6949 / MB).